Here is a 513-residue protein sequence, read N- to C-terminus: Cytochrome P450 monooxygenase sthF (513 aa).

2 helical membrane passes run F13–I33 and M212–L232. C452 contacts heme.

It belongs to the cytochrome P450 family. Requires heme as cofactor.

The protein localises to the membrane. It catalyses the reaction dehydroprobetaenone I + NADPH + O2 + H(+) = epoxybetaenone + NADP(+) + H2O. The catalysed reaction is dehydroprobetaenone I + 3 NADPH + 3 O2 + 3 H(+) = betaenone C + 3 NADP(+) + 3 H2O. The enzyme catalyses probetaenone I + 3 NADPH + 3 O2 + 3 H(+) = betaenone B + 3 NADP(+) + 3 H2O. The protein operates within mycotoxin biosynthesis. In terms of biological role, cytochrome P450 monooxygenase; part of the gene cluster that mediates the biosynthesis of the phytotoxin stemphyloxin II. The first step of the pathway is the synthesis of dehydroprobetaenone I by the polyketide synthase sthA and the enoyl reductase sthE via condensation of one acetyl-CoA starter unit with 7 malonyl-CoA units and 5 methylations. The C-terminal reductase (R) domain of sthA catalyzes the reductive release of the polyketide chain. Because sthA lacks a designated enoylreductase (ER) domain, the required activity is provided the enoyl reductase sthE. The short-chain dehydrogenase/reductase sthC then catalyzes reduction of dehydroprobetaenone I to probetaenone I. The cytochrome P450 monooxygenase sthF catalyzes successive epoxidation, oxidation (resulting from epoxide opening) and hydroxylation to install a tertiary alcohol in the decaline ring to yield betaenone C from dehydroprobetaenone I and betaenone B from probetaenone I. The FAD-linked oxidoreductase sthB is responsible for the conversion of betaenone C to betaenone A via an intramolecular aldol reaction between C-1 and C-17 to form the bridged tricyclic system in betaenone A. Finally, the cytochrome P450 monooxygenase sthD catalyzes the hydroxylation of C-15 to afford the final metabolite stemphyloxin II. The protein is Cytochrome P450 monooxygenase sthF of Phaeosphaeria nodorum (strain SN15 / ATCC MYA-4574 / FGSC 10173) (Glume blotch fungus).